We begin with the raw amino-acid sequence, 107 residues long: MVLKVPTSKVLLVLATLFAVAAMISSWMPQVAASPLAPTEYEQRRMMCSTGLSDVIQKICVSGTVALGDVFPNSFGKRRKRDLQNVTDLCCKSGGCTYRELLQYCKG.

Residues 1–33 form the signal peptide; sequence MVLKVPTSKVLLVLATLFAVAAMISSWMPQVAA. 3 cysteine pairs are disulfide-bonded: Cys48/Cys91, Cys60/Cys105, and Cys90/Cys96. Positions 67–76 are cleaved as a propeptide — connecting peptide; it reads LGDVFPNSFG.

This sequence belongs to the insulin family. In terms of assembly, heterodimer of a B chain and an A chain linked by two disulfide bonds. Expressed at a low level in the larval gut.

It is found in the secreted. Possible ligand of InR/insulin-like receptor. This chain is Insulin-like peptide 6, found in Drosophila melanogaster (Fruit fly).